Reading from the N-terminus, the 95-residue chain is Acylphosphatase (95 aa).

Residues 7 to 95 (RLTAWVLGTV…PKGEVGFRTR (89 aa)) form the Acylphosphatase-like domain. Residues R22 and N40 contribute to the active site.

This sequence belongs to the acylphosphatase family.

The catalysed reaction is an acyl phosphate + H2O = a carboxylate + phosphate + H(+). This chain is Acylphosphatase (acyP), found in Corynebacterium diphtheriae (strain ATCC 700971 / NCTC 13129 / Biotype gravis).